Reading from the N-terminus, the 293-residue chain is Succinate--CoA ligase [ADP-forming] subunit alpha (293 aa).

Residues 21–24 (TGKQ), lysine 47, and 99–101 (ITE) each bind CoA. Tyrosine 162 contacts substrate. Histidine 249 (tele-phosphohistidine intermediate) is an active-site residue.

It belongs to the succinate/malate CoA ligase alpha subunit family. Heterotetramer of two alpha and two beta subunits.

It catalyses the reaction succinate + ATP + CoA = succinyl-CoA + ADP + phosphate. The catalysed reaction is GTP + succinate + CoA = succinyl-CoA + GDP + phosphate. The protein operates within carbohydrate metabolism; tricarboxylic acid cycle; succinate from succinyl-CoA (ligase route): step 1/1. Succinyl-CoA synthetase functions in the citric acid cycle (TCA), coupling the hydrolysis of succinyl-CoA to the synthesis of either ATP or GTP and thus represents the only step of substrate-level phosphorylation in the TCA. The alpha subunit of the enzyme binds the substrates coenzyme A and phosphate, while succinate binding and nucleotide specificity is provided by the beta subunit. In Methanothermobacter thermautotrophicus (strain ATCC 29096 / DSM 1053 / JCM 10044 / NBRC 100330 / Delta H) (Methanobacterium thermoautotrophicum), this protein is Succinate--CoA ligase [ADP-forming] subunit alpha.